The following is a 524-amino-acid chain: AAA ATPase forming ring-shaped complexes (524 aa).

A disordered region spans residues 1–29 (MGMGQEKHTDAASQSRDPEAVAAHENDQL). Residues 22–59 (AAHENDQLRQRNHALAKALTRATEELRKAKAQLEQFMA) are a coiled coil. 250 to 255 (GNGKTL) lines the ATP pocket.

This sequence belongs to the AAA ATPase family. In terms of assembly, homohexamer. Assembles into a hexameric ring structure.

In Bifidobacterium animalis subsp. lactis (strain BB-12), this protein is AAA ATPase forming ring-shaped complexes.